An 810-amino-acid polypeptide reads, in one-letter code: Plasminogen (810 aa).

The signal sequence occupies residues 1–19 (MEHKEVVLLLLLFLKSGQG). In terms of domain architecture, PAN spans 20–98 (EPLDDYVNTQ…RDVVLFEKKV (79 aa)). 12 cysteine pairs are disulfide-bonded: Cys49/Cys73, Cys53/Cys61, Cys103/Cys181, Cys124/Cys164, Cys152/Cys176, Cys185/Cys262, Cys188/Cys316, Cys206/Cys245, Cys234/Cys257, Cys275/Cys352, Cys296/Cys335, and Cys324/Cys347. 3 Kringle domains span residues 103–181 (CKTG…IPEC), 184–262 (ACMH…IPRC), and 275–352 (CLKG…IPSC). The disordered stretch occupies residues 126 to 145 (KWSSTSPHRPRFSPATHPSE). Residues Arg136, Asp158, and Arg172 each contribute to the L-lysine site. Thr365 is a glycosylation site (O-linked (GalNAc...) threonine). 9 disulfide bridges follow: Cys377–Cys454, Cys398–Cys437, Cys426–Cys449, Cys481–Cys560, Cys502–Cys543, Cys531–Cys555, Cys567–Cys685, Cys577–Cys585, and Cys607–Cys623. 2 Kringle domains span residues 377-454 (CYHG…LKKC) and 481-560 (CMFG…VPQC). L-lysine contacts are provided by Asp432 and Arg445. In terms of domain architecture, Peptidase S1 spans 581–808 (VVGGCVANAH…FVTWIEGVMR (228 aa)). Ser597 is modified (phosphoserine). Catalysis depends on charge relay system residues His622 and Asp665. Ser688 is subject to Phosphoserine. 3 disulfides stabilise this stretch: Cys699-Cys766, Cys729-Cys745, and Cys756-Cys784. Ser760 functions as the Charge relay system in the catalytic mechanism.

This sequence belongs to the peptidase S1 family. Plasminogen subfamily. In terms of assembly, interacts with CSPG4 and AMOT. Interacts (via the Kringle domains) with HRG; the interaction tethers PLG to the cell surface and enhances its activation. Interacts (via Kringle 4 domain) with ADA; the interaction stimulates PLG activation when in complex with DPP4. Angiostatin: Interacts with ATP5F1A; the interaction inhibits most of the angiogenic effects of angiostatin. In terms of processing, in the presence of the inhibitor, the activation involves only cleavage after Arg-580, yielding two chains held together by two disulfide bonds. In the absence of the inhibitor, the activation involves additionally the removal of the activation peptide.

It is found in the secreted. The enzyme catalyses Preferential cleavage: Lys-|-Xaa &gt; Arg-|-Xaa, higher selectivity than trypsin. Converts fibrin into soluble products.. With respect to regulation, converted into plasmin by plasminogen activators, both plasminogen and its activator being bound to fibrin. Activated with catalytic amounts of streptokinase. Its function is as follows. Plasmin dissolves the fibrin of blood clots and acts as a proteolytic factor in a variety of other processes including embryonic development, tissue remodeling, tumor invasion, and inflammation. In ovulation, weakens the walls of the Graafian follicle. It activates the urokinase-type plasminogen activator, collagenases and several complement zymogens, such as C1, C4 and C5. Cleavage of fibronectin and laminin leads to cell detachment and apoptosis. Also cleaves fibrin, thrombospondin and von Willebrand factor. Its role in tissue remodeling and tumor invasion may be modulated by CSPG4. Binds to cells. The protein is Plasminogen (PLG) of Pongo abelii (Sumatran orangutan).